The primary structure comprises 457 residues: Adenylosuccinate synthetase (457 aa).

GTP is bound by residues 40–46 (GDEGKGK) and 70–72 (GHT). Aspartate 41 acts as the Proton acceptor in catalysis. 2 residues coordinate Mg(2+): aspartate 41 and glycine 70. IMP contacts are provided by residues 41–44 (DEGK), 68–71 (NAGH), threonine 161, arginine 175, asparagine 255, threonine 270, and arginine 334. Histidine 71 functions as the Proton donor in the catalytic mechanism. Substrate is bound at residue 330–336 (VTTGRKR). GTP is bound by residues arginine 336, 362-364 (KLD), and 444-446 (GVG).

This sequence belongs to the adenylosuccinate synthetase family. As to quaternary structure, homodimer. Requires Mg(2+) as cofactor.

The protein localises to the cytoplasm. It carries out the reaction IMP + L-aspartate + GTP = N(6)-(1,2-dicarboxyethyl)-AMP + GDP + phosphate + 2 H(+). Its pathway is purine metabolism; AMP biosynthesis via de novo pathway; AMP from IMP: step 1/2. In terms of biological role, plays an important role in the de novo pathway and in the salvage pathway of purine nucleotide biosynthesis. Catalyzes the first committed step in the biosynthesis of AMP from IMP. The sequence is that of Adenylosuccinate synthetase from Caenorhabditis elegans.